An 815-amino-acid chain; its full sequence is Leucine--tRNA ligase (815 aa).

The 'HIGH' region motif lies at 42–52 (PYPSGRLHMGH). The 'KMSKS' region signature appears at 571–575 (KMSKS). Lys574 is a binding site for ATP.

This sequence belongs to the class-I aminoacyl-tRNA synthetase family.

It is found in the cytoplasm. The enzyme catalyses tRNA(Leu) + L-leucine + ATP = L-leucyl-tRNA(Leu) + AMP + diphosphate. In Vesicomyosocius okutanii subsp. Calyptogena okutanii (strain HA), this protein is Leucine--tRNA ligase.